The sequence spans 88 residues: Cell division topological specificity factor (88 aa).

This sequence belongs to the MinE family.

Its function is as follows. Prevents the cell division inhibition by proteins MinC and MinD at internal division sites while permitting inhibition at polar sites. This ensures cell division at the proper site by restricting the formation of a division septum at the midpoint of the long axis of the cell. The protein is Cell division topological specificity factor of Shewanella denitrificans (strain OS217 / ATCC BAA-1090 / DSM 15013).